Consider the following 201-residue polypeptide: Cytochrome c oxidase assembly protein CtaG (201 aa).

At methionine 1–arginine 13 the chain is on the cytoplasmic side. A helical; Signal-anchor for type II membrane protein membrane pass occupies residues serine 14–serine 36. The Periplasmic segment spans residues valine 37–glycine 201.

This sequence belongs to the COX11/CtaG family.

Its subcellular location is the cell inner membrane. Its function is as follows. Exerts its effect at some terminal stage of cytochrome c oxidase synthesis, probably by being involved in the insertion of the copper B into subunit I. The polypeptide is Cytochrome c oxidase assembly protein CtaG (Brucella ovis (strain ATCC 25840 / 63/290 / NCTC 10512)).